The primary structure comprises 305 residues: N-acetylmuramic acid 6-phosphate etherase (305 aa).

The 164-residue stretch at 61–224 folds into the SIS domain; it reads ISDALAKGGR…STGAMVKLGK (164 aa). E89 (proton donor) is an active-site residue. E120 is an active-site residue.

The protein belongs to the GCKR-like family. MurNAc-6-P etherase subfamily. In terms of assembly, homodimer.

The catalysed reaction is N-acetyl-D-muramate 6-phosphate + H2O = N-acetyl-D-glucosamine 6-phosphate + (R)-lactate. Its pathway is amino-sugar metabolism; N-acetylmuramate degradation. Specifically catalyzes the cleavage of the D-lactyl ether substituent of MurNAc 6-phosphate, producing GlcNAc 6-phosphate and D-lactate. This is N-acetylmuramic acid 6-phosphate etherase from Synechocystis sp. (strain ATCC 27184 / PCC 6803 / Kazusa).